Consider the following 382-residue polypeptide: MSTWLLPENIADVLPSEARKIEELRRRLLDRFRSYGYEMVMPPLLEYLESLLTSGGADLRLRTFKLVDQLSGRTLGLRADITPQVARIDAHLLNRQGVTRLCYAGHVMHTRPRGLHATREQIQIGAEIYGHAGLEADLEIQQLMLDALHLAGLSRIRLDLCHAGVLAALLARDTQAAARGEALYDALSGKDVPLLNELTDDLGADTRAALRALPHLYGDASVLDEARQRLPALPEIARALDDLAQLAAQAKGVEVAIDLADLRGYAYHSGAMFTAYIDGVPNAIARGGRYDHVGQAYGRARPATGFSLDLRELARISPVEARGTAILAPWAQDDALRAAVAALRDAGEVVIQALPGHDHVLDEFACDRSLVERNGAWVVEPR.

It belongs to the class-II aminoacyl-tRNA synthetase family. HisZ subfamily. In terms of assembly, heteromultimer composed of HisG and HisZ subunits.

Its subcellular location is the cytoplasm. The protein operates within amino-acid biosynthesis; L-histidine biosynthesis; L-histidine from 5-phospho-alpha-D-ribose 1-diphosphate: step 1/9. Its function is as follows. Required for the first step of histidine biosynthesis. May allow the feedback regulation of ATP phosphoribosyltransferase activity by histidine. The polypeptide is ATP phosphoribosyltransferase regulatory subunit (Burkholderia multivorans (strain ATCC 17616 / 249)).